The primary structure comprises 266 residues: MADKDEAATRGNDWEVVSLTASAYAAAPGPKPVVDSKDDDHKEVTPCYEAETSHPLYMSRHFVFPPTGQLENTSDLTEASLTGSHCKEGSDLSLKGLDLSDDFGGLEFSEDKGKKEENIYTTAMSSLDDERAIGGSHVYEPVEEPTEPVSPSDVTLDLNPIKDDEVANSPPSEEAWWKRSVASLIAQAKETNTVWSICIAAAVMGIVILGQHWQQERWQILQQKWESSIGNEKAGRLMGPISRLKQAFVGGQRRDSFIRASAQNDR.

The AIM (Atg8-family-interacting motif) motif lies at 14 to 17 (WEVV). A helical membrane pass occupies residues 191-210 (TNTVWSICIAAAVMGIVILG). The AIM (Atg8-family-interacting motif) signature appears at 218–221 (WQIL).

Interacts with ATG8F.

Its subcellular location is the endoplasmic reticulum membrane. The protein resides in the membrane. In terms of biological role, may be involved in salt stress-induced vesicle-to-vacuole trafficking pathway. Through its interaction with ATG8F, may enable delivery of the vesicle bodies to the vacuole by an autophagic pathway. Plays a role in seed germination in response to exogenous abscisic acid (ABA) treatment. The protein is ATG8-interacting protein 2 of Arabidopsis thaliana (Mouse-ear cress).